A 265-amino-acid chain; its full sequence is Insulin-like growth factor-binding protein 2-B (265 aa).

An N-terminal signal peptide occupies residues 1–17 (MSLALLCSLLLVHGSLG). The 81-residue stretch at 19–99 (IVFRCPSCTA…IQGLGRCENK (81 aa)) folds into the IGFBP N-terminal domain. Disulfide bonds link cysteine 23–cysteine 49, cysteine 26–cysteine 51, cysteine 34–cysteine 52, cysteine 41–cysteine 55, cysteine 63–cysteine 76, and cysteine 70–cysteine 96. Over residues 107-122 (TNQESAAHSGEVNGTR) the composition is skewed to polar residues. Disordered regions lie at residues 107 to 128 (TNQESAAHSGEVNGTRSPPMKK) and 144 to 170 (HHNNKRTRMYNTQDDPKTPHPKQSQCQ). Positions 166-248 (QSQCQQELDK…SDKVRGDPNC (83 aa)) constitute a Thyroglobulin type-1 domain. 3 disulfides stabilise this stretch: cysteine 169/cysteine 203, cysteine 214/cysteine 225, and cysteine 227/cysteine 248. Residues 238-265 (SSDKVRGDPNCSQYYGGPELEPPTAQQK) form a disordered region. Residues 243 to 245 (RGD) carry the Cell attachment site motif.

Interacts with igf2. Interacts with igf1. In terms of tissue distribution, in early embryos, expressed at a low level in most tissues with expression becoming abundant in the liver by 96 hours post-fertilization (hpf). The expression pattern in adults exhibits sexual dimorphism; in adult males expression is limited exclusively to the liver whereas in adult females expression is observed in the liver and other tissues including the gut, kidney, ovary and muscle.

Its subcellular location is the secreted. Functionally, IGF-binding proteins prolong the half-life of the IGFs and have been shown to either inhibit or stimulate the growth promoting effects of the IGFs on cell culture. They alter the interaction of IGFs with their cell surface receptors. This Danio rerio (Zebrafish) protein is Insulin-like growth factor-binding protein 2-B.